The sequence spans 859 residues: DNA mismatch repair protein MutS (859 aa).

ATP is bound at residue 615-622 (GPNMGGKS).

This sequence belongs to the DNA mismatch repair MutS family.

Its function is as follows. This protein is involved in the repair of mismatches in DNA. It is possible that it carries out the mismatch recognition step. This protein has a weak ATPase activity. This chain is DNA mismatch repair protein MutS, found in Chromohalobacter salexigens (strain ATCC BAA-138 / DSM 3043 / CIP 106854 / NCIMB 13768 / 1H11).